A 341-amino-acid chain; its full sequence is DNA-directed RNA polymerase subunit alpha (341 aa).

The interval 1–233 (MVREEVAGST…DLFLPFLHAE (233 aa)) is alpha N-terminal domain (alpha-NTD). The tract at residues 269–341 (IPLNCIFIDQ…IDLLKNKLSF (73 aa)) is alpha C-terminal domain (alpha-CTD).

It belongs to the RNA polymerase alpha chain family. As to quaternary structure, in plastids the minimal PEP RNA polymerase catalytic core is composed of four subunits: alpha, beta, beta', and beta''. When a (nuclear-encoded) sigma factor is associated with the core the holoenzyme is formed, which can initiate transcription.

The protein localises to the plastid. It localises to the chloroplast. The enzyme catalyses RNA(n) + a ribonucleoside 5'-triphosphate = RNA(n+1) + diphosphate. In terms of biological role, DNA-dependent RNA polymerase catalyzes the transcription of DNA into RNA using the four ribonucleoside triphosphates as substrates. The chain is DNA-directed RNA polymerase subunit alpha from Lolium perenne (Perennial ryegrass).